We begin with the raw amino-acid sequence, 283 residues long: Small aggregate formation protein (283 aa).

It localises to the cytoplasm. In terms of biological role, knockout of the gene for this protein causes small aggregate formation. May regulate the secretion or processing of a secreted factor that regulates aggregate size. The chain is Small aggregate formation protein (smlA) from Dictyostelium discoideum (Social amoeba).